Reading from the N-terminus, the 122-residue chain is Basic phospholipase A2 (122 aa).

Intrachain disulfides connect cysteine 26/cysteine 115, cysteine 28/cysteine 44, cysteine 43/cysteine 95, cysteine 49/cysteine 122, cysteine 50/cysteine 88, cysteine 57/cysteine 81, and cysteine 75/cysteine 86. Residues tyrosine 27, glycine 29, and glycine 31 each contribute to the Ca(2+) site. Histidine 47 is an active-site residue. A Ca(2+)-binding site is contributed by aspartate 48. Aspartate 89 is a catalytic residue.

Belongs to the phospholipase A2 family. Group II subfamily. D49 sub-subfamily. As to quaternary structure, homodimer. Ca(2+) serves as cofactor. In terms of tissue distribution, expressed by the venom gland.

The protein localises to the secreted. The catalysed reaction is a 1,2-diacyl-sn-glycero-3-phosphocholine + H2O = a 1-acyl-sn-glycero-3-phosphocholine + a fatty acid + H(+). Functionally, snake venom phospholipase A2 (PLA2) that inhibits neuromuscular transmission by blocking acetylcholine release from the nerve termini. PLA2 catalyzes the calcium-dependent hydrolysis of the 2-acyl groups in 3-sn-phosphoglycerides. The chain is Basic phospholipase A2 from Gloydius blomhoffii (Mamushi).